A 317-amino-acid polypeptide reads, in one-letter code: MITRLVMIFSVLLLLSGCGQTPFKGKIEKVGMLFPDTINDLVWGTKGYKGLLNIQSKYNVDVYYKEGVKTEEDIINAIEDFHKRGVNLLYGHGSEYAEVFNLVGEDYPDMEFVISNAKAKADNVTSVHFSGEAMGFFGGMTAAHMSKTNQVGVIASFTWQPEVDGFIKGAKYENPDIEVNTKYTDHWDDDTTAVKLYQKMKNEGADVVYPAGDGYNVPVIQQIKKDGLYAIGYVTDQSDLGENTVLTSTVQNVDKAYEIIAEQFNKGTLEGGDHYYDLNTGVVEMGTFSPLVDQDFQQRIAKLIKTYNKTGELPKNE.

A signal peptide spans 1 to 17 (MITRLVMIFSVLLLLSG). Cysteine 18 carries the N-palmitoyl cysteine lipid modification. A lipid anchor (S-diacylglycerol cysteine) is attached at cysteine 18.

It belongs to the BMP lipoprotein family.

It localises to the cell membrane. In terms of biological role, positive activator of the comK gene. This chain is Transcriptional activator protein med (med), found in Bacillus subtilis (strain 168).